A 104-amino-acid chain; its full sequence is DET1- and DDB1-associated protein 1 (104 aa).

The segment covering 67-77 (KKNAAKKREQE) has biased composition (basic and acidic residues). The interval 67–104 (KKNAAKKREQEQAEGEGGSPAPPRKIARTDSQEMNEDS) is disordered.

The protein belongs to the DDA1 family. Component of numerous DCX (DDB1-CUL4-X-box) E3 ubiquitin-protein ligase complexes which consist of a core of DDB1, cullin-4 (CUL4A or CUL4B), DDA1 and RBX1.

The protein operates within protein modification; protein ubiquitination. In terms of biological role, functions as a component of numerous distinct DCX (DDB1-CUL4-X-box) E3 ubiquitin-protein ligase complexes which mediate the ubiquitination and subsequent proteasomal degradation of target proteins. In the DCX complexes, acts as a scaffolding subunit required to stabilize the complex. The sequence is that of DET1- and DDB1-associated protein 1 from Danio rerio (Zebrafish).